A 370-amino-acid polypeptide reads, in one-letter code: UDP-N-acetylglucosamine--N-acetylmuramyl-(pentapeptide) pyrophosphoryl-undecaprenol N-acetylglucosamine transferase (370 aa).

UDP-N-acetyl-alpha-D-glucosamine-binding positions include Thr10 to Gly12, Asn124, Arg166, Ser198, Ile252, and Gln297.

The protein belongs to the glycosyltransferase 28 family. MurG subfamily.

The protein localises to the cell membrane. It carries out the reaction di-trans,octa-cis-undecaprenyl diphospho-N-acetyl-alpha-D-muramoyl-L-alanyl-D-glutamyl-meso-2,6-diaminopimeloyl-D-alanyl-D-alanine + UDP-N-acetyl-alpha-D-glucosamine = di-trans,octa-cis-undecaprenyl diphospho-[N-acetyl-alpha-D-glucosaminyl-(1-&gt;4)]-N-acetyl-alpha-D-muramoyl-L-alanyl-D-glutamyl-meso-2,6-diaminopimeloyl-D-alanyl-D-alanine + UDP + H(+). It functions in the pathway cell wall biogenesis; peptidoglycan biosynthesis. Its function is as follows. Cell wall formation. Catalyzes the transfer of a GlcNAc subunit on undecaprenyl-pyrophosphoryl-MurNAc-pentapeptide (lipid intermediate I) to form undecaprenyl-pyrophosphoryl-MurNAc-(pentapeptide)GlcNAc (lipid intermediate II). This Finegoldia magna (strain ATCC 29328 / DSM 20472 / WAL 2508) (Peptostreptococcus magnus) protein is UDP-N-acetylglucosamine--N-acetylmuramyl-(pentapeptide) pyrophosphoryl-undecaprenol N-acetylglucosamine transferase.